The following is a 200-amino-acid chain: Lipopolysaccharide core heptose(II)-phosphate phosphatase (200 aa).

An N-terminal signal peptide occupies residues 1–25; that stretch reads MLAFCRSSLKSKKYFIILLALAAIA.

The protein belongs to the phosphoglycerate mutase family. Ais subfamily.

It localises to the periplasm. It functions in the pathway bacterial outer membrane biogenesis; lipopolysaccharide metabolism. Functionally, catalyzes the dephosphorylation of heptose(II) of the outer membrane lipopolysaccharide core. The protein is Lipopolysaccharide core heptose(II)-phosphate phosphatase of Shigella flexneri serotype 5b (strain 8401).